Consider the following 264-residue polypeptide: Thymidylate synthase (264 aa).

Residue arginine 21 participates in dUMP binding. Residue histidine 51 coordinates (6R)-5,10-methylene-5,6,7,8-tetrahydrofolate. 126–127 (RR) is a dUMP binding site. The active-site Nucleophile is the cysteine 146. DUMP-binding positions include 166–169 (RSCD), asparagine 177, and 207–209 (HLY). Aspartate 169 is a (6R)-5,10-methylene-5,6,7,8-tetrahydrofolate binding site. Alanine 263 is a (6R)-5,10-methylene-5,6,7,8-tetrahydrofolate binding site.

The protein belongs to the thymidylate synthase family. Bacterial-type ThyA subfamily. In terms of assembly, homodimer.

Its subcellular location is the cytoplasm. It catalyses the reaction dUMP + (6R)-5,10-methylene-5,6,7,8-tetrahydrofolate = 7,8-dihydrofolate + dTMP. It functions in the pathway pyrimidine metabolism; dTTP biosynthesis. Its function is as follows. Catalyzes the reductive methylation of 2'-deoxyuridine-5'-monophosphate (dUMP) to 2'-deoxythymidine-5'-monophosphate (dTMP) while utilizing 5,10-methylenetetrahydrofolate (mTHF) as the methyl donor and reductant in the reaction, yielding dihydrofolate (DHF) as a by-product. This enzymatic reaction provides an intracellular de novo source of dTMP, an essential precursor for DNA biosynthesis. The polypeptide is Thymidylate synthase (Shewanella oneidensis (strain ATCC 700550 / JCM 31522 / CIP 106686 / LMG 19005 / NCIMB 14063 / MR-1)).